The primary structure comprises 409 residues: Tryptophan synthase beta chain (409 aa).

Lys-95 is subject to N6-(pyridoxal phosphate)lysine.

The protein belongs to the TrpB family. In terms of assembly, tetramer of two alpha and two beta chains. Pyridoxal 5'-phosphate serves as cofactor.

It catalyses the reaction (1S,2R)-1-C-(indol-3-yl)glycerol 3-phosphate + L-serine = D-glyceraldehyde 3-phosphate + L-tryptophan + H2O. The protein operates within amino-acid biosynthesis; L-tryptophan biosynthesis; L-tryptophan from chorismate: step 5/5. The beta subunit is responsible for the synthesis of L-tryptophan from indole and L-serine. This chain is Tryptophan synthase beta chain, found in Pseudomonas savastanoi pv. phaseolicola (Pseudomonas syringae pv. phaseolicola).